The sequence spans 764 residues: MKLSINDLNVFVNTPKDIAKLCEDLSRLGLEVESCIPCIAPKNVVVGKILEKAPHKNAEKLSVCQVDVGKEVLQIVCGAKNVAPNQFVPVALNGALIGSTTIAKTELRGVESHGMICSSIELGFPKINDGILELDESVGELVLGKELNEYAPFNTHVLEISLTPNRGDCLSVLGIAREISAFYHTPLKPIKALNFTPKSGLITLSAGENIESHLAYYLICNHSLKTPLNIKLSLAHNNALSENDLNNFIEFSTHFSGVIMNAYSLNTTPMDLSVKNDENNLESVYINHQKRSTIAIKHQVQKDLSECLLLEASYTDPISLSLKLHALKDKTLQKDNALIYRSARGSNPNLSDGLNFLSAHLKATILESKQTEHSLKDRTLTFQLEDITEILGLAVEKEKIQGILKNLGFKVSVKEPNSKPQILEVIAPNFRHDIKTIQDIAEEILRFVGIDNLVSKPLHCVSSKNSNPNYDTHRFFENLKHKALACGFKEVIHYVFYSKEKQQKLGFEVLEDPLELQNPITTELNTLRTSLVCGLLDASLRNKNLGFKSIALYEKGSVYNSKREEIQKLGFLISGLQKKESYPDTKGKAWDFYSFAECVSKVIGDFSLEKLTTQTPINHPYQSAKIIQNHEIIGVIAKIHPKVIQELDLFESYYAEIDAFKLKRPAMLLKPFSIYPSSVRDLTLIIDENTAFSGIKKALKDAQIPNLSEILPLDIFKESNNSIALSVRCVIHSLEKTLNDEEVNSAVQKALEILEKEFNARLKG.

The tRNA-binding domain occupies 38–148 (CIAPKNVVVG…GELVLGKELN (111 aa)). In terms of domain architecture, B5 spans 375–455 (LKDRTLTFQL…RFVGIDNLVS (81 aa)). Mg(2+) contacts are provided by Asp433, Asp439, Glu442, and Glu443. Residues 673 to 763 (SIYPSSVRDL…LEKEFNARLK (91 aa)) enclose the FDX-ACB domain.

It belongs to the phenylalanyl-tRNA synthetase beta subunit family. Type 1 subfamily. In terms of assembly, tetramer of two alpha and two beta subunits. Mg(2+) is required as a cofactor.

It localises to the cytoplasm. It catalyses the reaction tRNA(Phe) + L-phenylalanine + ATP = L-phenylalanyl-tRNA(Phe) + AMP + diphosphate + H(+). In Helicobacter pylori (strain ATCC 700392 / 26695) (Campylobacter pylori), this protein is Phenylalanine--tRNA ligase beta subunit (pheT).